Here is a 1216-residue protein sequence, read N- to C-terminus: RAB11-binding protein RELCH (1216 aa).

2 disordered regions span residues 1-73 (MAAM…GLPG) and 135-177 (GNFE…QLNR). Ala2 bears the N-acetylalanine mark. Residues Ser20 and Ser22 each carry the phosphoserine modification. The segment covering 21–31 (DSDEDDDEVAA) has biased composition (acidic residues). Thr32 is modified (phosphothreonine). 2 positions are modified to phosphoserine: Ser54 and Ser56. Residues 148 to 163 (GAPGVPGAAGVGGAGG) show a composition bias toward gly residues. Residues Ser180 and Ser182 each carry the phosphoserine modification. At Thr183 the chain carries Phosphothreonine. Phosphoserine is present on Ser186. Residues 197–231 (NRETDEKVAVLEFELRKAKETIQALRANLTKAAEH) are a coiled coil. The LisH domain occupies 255 to 287 (EKRALNFLVNEFLLKNNYKLTSITFSDENDDQD). Positions 359–397 (VQKLEDKISLLNSEKWSLMEQIRRLKSEMDFLKNEHFAI) form a coiled coil. Residue Ser385 is modified to Phosphoserine. The disordered stretch occupies residues 401–477 (CDSVQPPLDQ…SSLSSKKTVH (77 aa)). Positions 411 to 435 (LPHKDSEDSGQHPDVNSSDKGKNTD) are enriched in basic and acidic residues. Ser453 carries the phosphoserine modification. An interaction with RAB11A and RAB11B region spans residues 497 to 779 (CRMSADSRLG…SSKAKLHGEV (283 aa)). 2 HEAT repeats span residues 601–639 (LLPQ…RSSL) and 640–679 (VLSM…KYHQ). At Ser792 the chain carries Phosphoserine. Residues 1004-1042 (VAPALVTLSSDPEFSVRIATIPAFGTIMETVIQRELLER) form an HEAT 3 repeat. Residue Ser1149 is modified to Phosphoserine.

The protein localises to the recycling endosome. It localises to the golgi apparatus. The protein resides in the trans-Golgi network. Functionally, regulates intracellular cholesterol distribution from recycling endosomes to the trans-Golgi network through interactions with RAB11 and OSBP. Functions in membrane tethering and promotes OSBP-mediated cholesterol transfer between RAB11-bound recycling endosomes and OSBP-bound Golgi-like membranes. The chain is RAB11-binding protein RELCH from Homo sapiens (Human).